The sequence spans 263 residues: MEAGAGGAGSDTKGGGSPATPEDPRSPAKPAAPEDPQMPAQPALPQLPRRPRTLDEDGAPSEDGAAGGSEPAPEDAPAQAAGEAGPVSKAAAGGAPHIGFVGEPPPYAPPDPKAAPLLYPPFPQVPVVLQPAPSALFPPPAQLYPAAPTPPALFSPPAGAAFPFPVYNGPMAGVPGPATVEHRPLPKDYMMESVLVTLFCCLLTGLIAIVYSHEARAALGRGDLAQAEEASRKARSLVLFSLLFGVFVSTSWVIYVVVALYLP.

The segment covering 1-17 has biased composition (gly residues); sequence MEAGAGGAGSDTKGGGS. Residues 1–107 are disordered; it reads MEAGAGGAGS…IGFVGEPPPY (107 aa). Low complexity-rich tracts occupy residues 37 to 47 and 75 to 86; these read QMPAQPALPQL and DAPAQAAGEAGP. The next 2 membrane-spanning stretches (helical) occupy residues 190-210 and 238-258; these read MMES…IAIV and VLFS…YVVV.

This sequence belongs to the CD225/Dispanin family.

Its subcellular location is the membrane. The polypeptide is Proline rich transmembrane protein 1B (Homo sapiens (Human)).